Here is a 110-residue protein sequence, read N- to C-terminus: MKKALQVAMFSLFTVIGFNAQANEHHHETMSEAQPQVISATGVVKGFDLESKKITIHHDPIAAVNWPEMTMRFTITPQTKMSGIKTGDKVAFNFVQQGNLSLLQDIKVSQ.

The N-terminal stretch at 1-21 is a signal peptide; the sequence is MKKALQVAMFSLFTVIGFNAQ.

In terms of assembly, the cus efflux system is composed of CusA, CusB, CusC and CusF.

It is found in the periplasm. Part of a cation efflux system that mediates resistance to copper and silver. Binds one copper per polypeptide. This Escherichia coli O157:H7 protein is Cation efflux system protein CusF (cusF).